Here is a 396-residue protein sequence, read N- to C-terminus: NADH-quinone oxidoreductase subunit D (396 aa).

The protein belongs to the complex I 49 kDa subunit family. As to quaternary structure, NDH-1 is composed of 14 different subunits. Subunits NuoB, C, D, E, F, and G constitute the peripheral sector of the complex.

The protein resides in the cell inner membrane. The enzyme catalyses a quinone + NADH + 5 H(+)(in) = a quinol + NAD(+) + 4 H(+)(out). Its function is as follows. NDH-1 shuttles electrons from NADH, via FMN and iron-sulfur (Fe-S) centers, to quinones in the respiratory chain. The immediate electron acceptor for the enzyme in this species is believed to be ubiquinone. Couples the redox reaction to proton translocation (for every two electrons transferred, four hydrogen ions are translocated across the cytoplasmic membrane), and thus conserves the redox energy in a proton gradient. This chain is NADH-quinone oxidoreductase subunit D, found in Orientia tsutsugamushi (strain Boryong) (Rickettsia tsutsugamushi).